The chain runs to 579 residues: Isocitrate dehydrogenase kinase/phosphatase (579 aa).

Residues 324–330 (ADGTPGM) and lysine 345 contribute to the ATP site. Residue aspartate 380 is part of the active site.

The protein belongs to the AceK family.

Its subcellular location is the cytoplasm. It carries out the reaction L-seryl-[isocitrate dehydrogenase] + ATP = O-phospho-L-seryl-[isocitrate dehydrogenase] + ADP + H(+). Bifunctional enzyme which can phosphorylate or dephosphorylate isocitrate dehydrogenase (IDH) on a specific serine residue. This is a regulatory mechanism which enables bacteria to bypass the Krebs cycle via the glyoxylate shunt in response to the source of carbon. When bacteria are grown on glucose, IDH is fully active and unphosphorylated, but when grown on acetate or ethanol, the activity of IDH declines drastically concomitant with its phosphorylation. This is Isocitrate dehydrogenase kinase/phosphatase from Xanthomonas campestris pv. campestris (strain 8004).